The following is a 361-amino-acid chain: Phosphoserine aminotransferase (361 aa).

Residue R43 participates in L-glutamate binding. Residues 77–78, W103, T153, D173, and Q196 contribute to the pyridoxal 5'-phosphate site; that span reads AS. Residue K197 is modified to N6-(pyridoxal phosphate)lysine. Position 238–239 (238–239) interacts with pyridoxal 5'-phosphate; it reads NT.

This sequence belongs to the class-V pyridoxal-phosphate-dependent aminotransferase family. SerC subfamily. In terms of assembly, homodimer. The cofactor is pyridoxal 5'-phosphate.

It is found in the cytoplasm. The enzyme catalyses O-phospho-L-serine + 2-oxoglutarate = 3-phosphooxypyruvate + L-glutamate. The catalysed reaction is 4-(phosphooxy)-L-threonine + 2-oxoglutarate = (R)-3-hydroxy-2-oxo-4-phosphooxybutanoate + L-glutamate. Its pathway is amino-acid biosynthesis; L-serine biosynthesis; L-serine from 3-phospho-D-glycerate: step 2/3. It functions in the pathway cofactor biosynthesis; pyridoxine 5'-phosphate biosynthesis; pyridoxine 5'-phosphate from D-erythrose 4-phosphate: step 3/5. Its function is as follows. Catalyzes the reversible conversion of 3-phosphohydroxypyruvate to phosphoserine and of 3-hydroxy-2-oxo-4-phosphonooxybutanoate to phosphohydroxythreonine. The polypeptide is Phosphoserine aminotransferase (Pseudomonas aeruginosa (strain ATCC 15692 / DSM 22644 / CIP 104116 / JCM 14847 / LMG 12228 / 1C / PRS 101 / PAO1)).